The chain runs to 500 residues: Glycerol kinase (500 aa).

Position 14 (Thr14) interacts with ADP. 3 residues coordinate ATP: Thr14, Thr15, and Ser16. Thr14 contacts sn-glycerol 3-phosphate. Arg18 serves as a coordination point for ADP. Sn-glycerol 3-phosphate contacts are provided by Arg84, Glu85, and Tyr136. Arg84, Glu85, and Tyr136 together coordinate glycerol. His232 is modified (phosphohistidine; by HPr). Asp246 provides a ligand contact to sn-glycerol 3-phosphate. Positions 246 and 247 each coordinate glycerol. Thr268 and Gly311 together coordinate ADP. Thr268, Gly311, Gln315, and Gly412 together coordinate ATP. 2 residues coordinate ADP: Gly412 and Asn416.

It belongs to the FGGY kinase family. As to quaternary structure, homotetramer and homodimer (in equilibrium). The phosphoenolpyruvate-dependent sugar phosphotransferase system (PTS), including enzyme I, and histidine-containing protein (HPr) are required for the phosphorylation, which leads to the activation of the enzyme.

The enzyme catalyses glycerol + ATP = sn-glycerol 3-phosphate + ADP + H(+). Its pathway is polyol metabolism; glycerol degradation via glycerol kinase pathway; sn-glycerol 3-phosphate from glycerol: step 1/1. Activated by phosphorylation and inhibited by fructose 1,6-bisphosphate (FBP). Functionally, key enzyme in the regulation of glycerol uptake and metabolism. Catalyzes the phosphorylation of glycerol to yield sn-glycerol 3-phosphate. The polypeptide is Glycerol kinase (Limosilactobacillus reuteri (strain DSM 20016) (Lactobacillus reuteri)).